A 483-amino-acid polypeptide reads, in one-letter code: Cytochrome P450 monooxygenase stcF (483 aa).

Residue cysteine 424 coordinates heme.

This sequence belongs to the cytochrome P450 family. The cofactor is heme.

It participates in mycotoxin biosynthesis; sterigmatocystin biosynthesis. Cytochrome P450 monooxygenase; part of the gene cluster that mediates the biosynthesis of sterigmatocystin (ST), a polyketide-derived furanocoumarin which is part of the most toxic and carcinogenic compounds among the known mycotoxins. The first step in the biosynthesis of sterigmatocystin is the production of hexanoate by the fatty acid synthase (FAS) units stcJ and stcK. The polyketide backbone is assembled by the non-reducing polyketide synthase stcA by condensation of the starter hexanoyl-CoA and 7 malonyl-CoA extender units followed by cyclization and release of norsolorinic acid. Norsolorinic acid is the first stable intermediate in the biosynthesis of sterigmatocystin and is converted into averantin (AVN) by the ketoreductase stcE which reduces the hexanoate ketone to an alcohol. Averantin is then oxidized into 5'-hydroxyaverantin (HAVN) by the cytochrome P450 monooxygenase stcF. 5'-hydroxyaverantin is further converted to 5'-oxyaverantin (OAVN) by the 5'-hydroxyaverantin dehydrogenase stcG. The next step is the conversion of OAVN into averufin (AVF) which is catalyzed by a yet to be identified enzyme. The cytochrome P450 monooxygenase stcB and the flavin-binding monooxygenase stcW are both required for the conversion of averufin to 1-hydroxyversicolorone. The esterase stcI probably catalyzes the formation of versiconal hemiacetal acetate from 1-hydroxyversicolorone. The oxydoreductase stcN then probably catalyzes the biosynthetic step from versiconal to versicolorin B (VERB). The next step is performed by the versicolorin B desaturase stcL to produce versicolorin A (VERA). The ketoreductase stcU and the cytochrome P450 monooxygenase stcS are involved in the conversion of versicolorin A to demethylsterigmatocystin. The Baeyer-Villiger oxidas stcQ and the reductase stcR might be involved in the biosynthetic step from versicolorin A to demethylsterigmatocystin. The final step in the biosynthesis of sterigmatocystin is the methylation of demethylsterigmatocystin catalyzed by the methyltransferase stcP. This Emericella nidulans (strain FGSC A4 / ATCC 38163 / CBS 112.46 / NRRL 194 / M139) (Aspergillus nidulans) protein is Cytochrome P450 monooxygenase stcF.